The chain runs to 156 residues: ATP synthase subunit b (156 aa).

A helical transmembrane segment spans residues 5 to 25; it reads LTLIGQAIAFAFFVAFCMKFV.

This sequence belongs to the ATPase B chain family. As to quaternary structure, F-type ATPases have 2 components, F(1) - the catalytic core - and F(0) - the membrane proton channel. F(1) has five subunits: alpha(3), beta(3), gamma(1), delta(1), epsilon(1). F(0) has three main subunits: a(1), b(2) and c(10-14). The alpha and beta chains form an alternating ring which encloses part of the gamma chain. F(1) is attached to F(0) by a central stalk formed by the gamma and epsilon chains, while a peripheral stalk is formed by the delta and b chains.

Its subcellular location is the cell inner membrane. Its function is as follows. F(1)F(0) ATP synthase produces ATP from ADP in the presence of a proton or sodium gradient. F-type ATPases consist of two structural domains, F(1) containing the extramembraneous catalytic core and F(0) containing the membrane proton channel, linked together by a central stalk and a peripheral stalk. During catalysis, ATP synthesis in the catalytic domain of F(1) is coupled via a rotary mechanism of the central stalk subunits to proton translocation. Component of the F(0) channel, it forms part of the peripheral stalk, linking F(1) to F(0). This is ATP synthase subunit b from Acinetobacter baumannii (strain SDF).